We begin with the raw amino-acid sequence, 230 residues long: Cytochrome c oxidase subunit 2 (230 aa).

At 1 to 14 (MAHPSQLGFQDAAS) the chain is on the mitochondrial intermembrane side. The helical transmembrane segment at 15–45 (PVMEELLHFHDHTLMIVFLISTLVLYIIMAM) threads the bilayer. Residues 46-59 (VSTKLTNKYILDSQ) lie on the Mitochondrial matrix side of the membrane. A helical membrane pass occupies residues 60–87 (EIEIVWTILPAVILIMIALPSLRILYLM). At 88-230 (DEINDPHLTI…SWSSLMLEEA (143 aa)) the chain is on the mitochondrial intermembrane side. Residues His161, Cys196, Glu198, Cys200, His204, and Met207 each contribute to the Cu cation site. Glu198 is a binding site for Mg(2+).

It belongs to the cytochrome c oxidase subunit 2 family. In terms of assembly, component of the cytochrome c oxidase (complex IV, CIV), a multisubunit enzyme composed of 14 subunits. The complex is composed of a catalytic core of 3 subunits MT-CO1, MT-CO2 and MT-CO3, encoded in the mitochondrial DNA, and 11 supernumerary subunits COX4I, COX5A, COX5B, COX6A, COX6B, COX6C, COX7A, COX7B, COX7C, COX8 and NDUFA4, which are encoded in the nuclear genome. The complex exists as a monomer or a dimer and forms supercomplexes (SCs) in the inner mitochondrial membrane with NADH-ubiquinone oxidoreductase (complex I, CI) and ubiquinol-cytochrome c oxidoreductase (cytochrome b-c1 complex, complex III, CIII), resulting in different assemblies (supercomplex SCI(1)III(2)IV(1) and megacomplex MCI(2)III(2)IV(2)). Found in a complex with TMEM177, COA6, COX18, COX20, SCO1 and SCO2. Interacts with TMEM177 in a COX20-dependent manner. Interacts with COX20. Interacts with COX16. Cu cation is required as a cofactor.

The protein localises to the mitochondrion inner membrane. The catalysed reaction is 4 Fe(II)-[cytochrome c] + O2 + 8 H(+)(in) = 4 Fe(III)-[cytochrome c] + 2 H2O + 4 H(+)(out). In terms of biological role, component of the cytochrome c oxidase, the last enzyme in the mitochondrial electron transport chain which drives oxidative phosphorylation. The respiratory chain contains 3 multisubunit complexes succinate dehydrogenase (complex II, CII), ubiquinol-cytochrome c oxidoreductase (cytochrome b-c1 complex, complex III, CIII) and cytochrome c oxidase (complex IV, CIV), that cooperate to transfer electrons derived from NADH and succinate to molecular oxygen, creating an electrochemical gradient over the inner membrane that drives transmembrane transport and the ATP synthase. Cytochrome c oxidase is the component of the respiratory chain that catalyzes the reduction of oxygen to water. Electrons originating from reduced cytochrome c in the intermembrane space (IMS) are transferred via the dinuclear copper A center (CU(A)) of subunit 2 and heme A of subunit 1 to the active site in subunit 1, a binuclear center (BNC) formed by heme A3 and copper B (CU(B)). The BNC reduces molecular oxygen to 2 water molecules using 4 electrons from cytochrome c in the IMS and 4 protons from the mitochondrial matrix. This chain is Cytochrome c oxidase subunit 2 (MT-CO2), found in Squalus acanthias (Spiny dogfish).